We begin with the raw amino-acid sequence, 191 residues long: Inosine triphosphate pyrophosphatase (191 aa).

ITP is bound at residue 12–17 (TGNANK). Residue E42 coordinates Mg(2+). ITP-binding positions include K54, 70 to 71 (DT), K87, 145 to 148 (FGWD), K168, and 173 to 174 (HR).

It belongs to the HAM1 NTPase family. Homodimer. It depends on Mg(2+) as a cofactor. Mn(2+) is required as a cofactor.

It is found in the cytoplasm. It carries out the reaction ITP + H2O = IMP + diphosphate + H(+). The enzyme catalyses dITP + H2O = dIMP + diphosphate + H(+). It catalyses the reaction XTP + H2O = XMP + diphosphate + H(+). Functionally, pyrophosphatase that hydrolyzes non-canonical purine nucleotides such as inosine triphosphate (ITP), deoxyinosine triphosphate (dITP) or xanthosine 5'-triphosphate (XTP) to their respective monophosphate derivatives. The enzyme does not distinguish between the deoxy- and ribose forms. Probably excludes non-canonical purines from RNA and DNA precursor pools, thus preventing their incorporation into RNA and DNA and avoiding chromosomal lesions. The protein is Inosine triphosphate pyrophosphatase of Phytophthora infestans (strain T30-4) (Potato late blight agent).